The sequence spans 139 residues: Large-conductance mechanosensitive channel (139 aa).

2 helical membrane-spanning segments follow: residues 14-34 and 86-106; these read VVDM…VKSL and GLFI…FLLI.

This sequence belongs to the MscL family. As to quaternary structure, homopentamer.

It localises to the cell inner membrane. Functionally, channel that opens in response to stretch forces in the membrane lipid bilayer. May participate in the regulation of osmotic pressure changes within the cell. The chain is Large-conductance mechanosensitive channel from Methylobacillus flagellatus (strain ATCC 51484 / DSM 6875 / VKM B-1610 / KT).